The sequence spans 229 residues: PHO85 cyclin-5 (229 aa).

Positions 1 to 24 (MDGNHRFTPDSKEFNTVVKSKESS) are enriched in basic and acidic residues. Residues 1–46 (MDGNHRFTPDSKEFNTVVKSKESSTGRNPYQTPPLEHNGTHHQTNY) are disordered.

This sequence belongs to the cyclin family. PCL1,2 subfamily. In terms of assembly, forms a cyclin-CDK complex with PHO85.

Its function is as follows. Cyclin partner of the cyclin-dependent kinase (CDK) PHO85. Positively controls degradation of transcription factor GCN4 under favorable growth conditions. The PCL5-PHO85 cyclin-CDK holoenzyme phosphorylates GCN4, which is required for its degradation by the E3 ubiquitin ligase complex SCF(Cdc4). Amino acid starvation reduces PCL5-PHO85-associated GCN4 kinase activity and leads to stabilization of GCN4. The protein is PHO85 cyclin-5 (PCL5) of Saccharomyces cerevisiae (strain ATCC 204508 / S288c) (Baker's yeast).